Consider the following 435-residue polypeptide: uncharacterized protein (435 aa).

A run of 9 helical transmembrane segments spans residues 40–60 (LVSTWLVVWGIWHVYFVEAVF), 103–123 (VLWTSITVWLIALAVVVWLIL), 133–153 (IMLALLVPVLPFAFSYAIYNP), 195–215 (LIHEAIPLEFALGAVLAIIVL), 226–246 (ICTALAIGPGTVSVLLLAVVG), 313–333 (VAVVGFRALFGAFLLGLLFFV), 358–378 (LALPVLASALLVPLFITAVDW), 381–401 (WWVMITLDVAIVYILYAIDRP), and 414–434 (VFVCVVLVLAVIPTGSANNIG).

The protein localises to the cell membrane. This is an uncharacterized protein from Mycobacterium bovis (strain ATCC BAA-935 / AF2122/97).